The primary structure comprises 336 residues: Glyceraldehyde-3-phosphate dehydrogenase (336 aa).

NAD(+) is bound by residues 12 to 13 (RI), Asp34, Arg78, and Thr121. D-glyceraldehyde 3-phosphate-binding positions include 151–153 (SCT), Thr182, Arg199, 212–213 (TG), and Arg235. Catalysis depends on Cys152, which acts as the Nucleophile. Asn316 contacts NAD(+).

Belongs to the glyceraldehyde-3-phosphate dehydrogenase family. In terms of assembly, homotetramer.

It is found in the cytoplasm. The catalysed reaction is D-glyceraldehyde 3-phosphate + phosphate + NAD(+) = (2R)-3-phospho-glyceroyl phosphate + NADH + H(+). It participates in carbohydrate degradation; glycolysis; pyruvate from D-glyceraldehyde 3-phosphate: step 1/5. Its function is as follows. Catalyzes the oxidative phosphorylation of glyceraldehyde 3-phosphate (G3P) to 1,3-bisphosphoglycerate (BPG) using the cofactor NAD. The first reaction step involves the formation of a hemiacetal intermediate between G3P and a cysteine residue, and this hemiacetal intermediate is then oxidized to a thioester, with concomitant reduction of NAD to NADH. The reduced NADH is then exchanged with the second NAD, and the thioester is attacked by a nucleophilic inorganic phosphate to produce BPG. The sequence is that of Glyceraldehyde-3-phosphate dehydrogenase (gap) from Streptococcus pyogenes serotype M3 (strain ATCC BAA-595 / MGAS315).